The chain runs to 377 residues: MSSCSVVNLAKQLISIPSISPMDLGCQKLISDRLINIGFSVENMNVNQTNNMWAYKGSGTTLAFSGHTDVVPIGNKILWNSPPFSPTVDKGVLFGRGSADMKGALAAMVIAVERFVKKQPDHHGRIAFLITSDEESMAHDGTIKIVSNLIKRKENIDYCIIGEPSSEQKLGDVIKNGRRGSITAYLCIYGVQGHIAYPNFSDNPIHKSISFFCTLISNCWDNGNVFFSPTSVQIYDIESKSSSDNMVPSELTVKFNFRFSNEITSSDIKKKVELLLKHFNLKYSIEWHVSGNPFLTKVGLLSDIVVRSVEELCHISPNLSTSGGTSDGRFIAELGSQIIELGLINKTIHKANECVEIKDLRLLCHLYECIITKIFEK.

His-67 contacts Zn(2+). Residue Asp-69 is part of the active site. Asp-100 lines the Zn(2+) pocket. Glu-134 acts as the Proton acceptor in catalysis. Glu-135, Glu-163, and His-349 together coordinate Zn(2+).

Belongs to the peptidase M20A family. DapE subfamily. As to quaternary structure, homodimer. It depends on Zn(2+) as a cofactor. The cofactor is Co(2+).

The enzyme catalyses N-succinyl-(2S,6S)-2,6-diaminopimelate + H2O = (2S,6S)-2,6-diaminopimelate + succinate. The protein operates within amino-acid biosynthesis; L-lysine biosynthesis via DAP pathway; LL-2,6-diaminopimelate from (S)-tetrahydrodipicolinate (succinylase route): step 3/3. Functionally, catalyzes the hydrolysis of N-succinyl-L,L-diaminopimelic acid (SDAP), forming succinate and LL-2,6-diaminopimelate (DAP), an intermediate involved in the bacterial biosynthesis of lysine and meso-diaminopimelic acid, an essential component of bacterial cell walls. The protein is Succinyl-diaminopimelate desuccinylase of Buchnera aphidicola subsp. Baizongia pistaciae (strain Bp).